The primary structure comprises 541 residues: Probable inorganic phosphate transporter 1-12 (541 aa).

The Cytoplasmic portion of the chain corresponds to 1–26 (MGRQDQQLQVLNALDAAKTQWYHFTA). The chain crosses the membrane as a helical span at residues 27-47 (IIVAGMGFFTDAYDLFCISLV). Residues 48–70 (TKLLGRIYYTDPASPTPGSLPPN) are Extracellular-facing. The chain crosses the membrane as a helical span at residues 71–91 (IAAAVNGVALCGTLSGQLFFG). Residues 92 to 100 (WLGDKLGRK) lie on the Cytoplasmic side of the membrane. A helical membrane pass occupies residues 101–121 (SVYGMTLLLMVICSIASGLSF). The Extracellular portion of the chain corresponds to 122–124 (SHT). The helical transmembrane segment at 125–145 (PTSVMATLCFFRFWLGFGIGG) threads the bilayer. Topologically, residues 146–163 (DYPLSATIMSEYANKKTR) are cytoplasmic. A helical transmembrane segment spans residues 164 to 184 (GAFIAAVFAMQGFGILAGGVV). Residues 185–213 (TLAMSAGFQAAFPAPAYEVNAAASTVPQA) are Extracellular-facing. A helical membrane pass occupies residues 214 to 234 (DYVWRIILMLGALPAILTYYW). The Cytoplasmic portion of the chain corresponds to 235–297 (RMKMPETARY…ARFAKRHGAH (63 aa)). Residues 298 to 318 (LLGTAATWFLVDVAYYSQNLF) form a helical membrane-spanning segment. The Extracellular portion of the chain corresponds to 319-349 (QKDIFTSIHWIPKARTMSELEEVFRISRAQT). A helical transmembrane segment spans residues 350–370 (LIALCGTVPGYWFTVFLIDII). The Cytoplasmic segment spans residues 371 to 374 (GRFK). A helical membrane pass occupies residues 375-395 (IQLLGFAGMTAFMLGLAIPYH). The Extracellular portion of the chain corresponds to 396–403 (HWTMPGNQ). A helical transmembrane segment spans residues 404–424 (VIFVFLYGFTFFFANFGPNAT). Topologically, residues 425-443 (TFIVPAEIFPARLRSTCHG) are cytoplasmic. Residues 444–464 (ISAASGKAGAIIGAFGFLYAA) traverse the membrane as a helical segment. The Extracellular segment spans residues 465 to 484 (QPQDKAHVDAGYKPGIGVRN). Residues 485-505 (ALFVLAGCNLVGFLMTWMLVP) form a helical membrane-spanning segment. Topologically, residues 506-541 (ESKGKSLEEMSGEADDEEASANGGATAVNSSGVEMV) are cytoplasmic. The interval 512–541 (LEEMSGEADDEEASANGGATAVNSSGVEMV) is disordered. The segment covering 515–524 (MSGEADDEEA) has biased composition (acidic residues). Polar residues predominate over residues 532 to 541 (AVNSSGVEMV).

Belongs to the major facilitator superfamily. Phosphate:H(+) symporter (TC 2.A.1.9) family.

The protein resides in the membrane. Functionally, high-affinity transporter for external inorganic phosphate. The chain is Probable inorganic phosphate transporter 1-12 (PHT1-12) from Oryza sativa subsp. japonica (Rice).